The sequence spans 217 residues: Large ribosomal subunit protein bL25 (217 aa).

This sequence belongs to the bacterial ribosomal protein bL25 family. CTC subfamily. In terms of assembly, part of the 50S ribosomal subunit; part of the 5S rRNA/L5/L18/L25 subcomplex. Contacts the 5S rRNA. Binds to the 5S rRNA independently of L5 and L18.

Its function is as follows. This is one of the proteins that binds to the 5S RNA in the ribosome where it forms part of the central protuberance. In Methylobacterium sp. (strain 4-46), this protein is Large ribosomal subunit protein bL25.